The following is a 121-amino-acid chain: Large ribosomal subunit protein uL14c (121 aa).

This sequence belongs to the universal ribosomal protein uL14 family. Part of the 50S ribosomal subunit.

It localises to the plastid. Its subcellular location is the chloroplast. Functionally, binds to 23S rRNA. The polypeptide is Large ribosomal subunit protein uL14c (Trieres chinensis (Marine centric diatom)).